Reading from the N-terminus, the 476-residue chain is Growth/differentiation factor 10 (476 aa).

The N-terminal stretch at 1-29 is a signal peptide; that stretch reads MAPGPARISLGSQLLPMVPLLLLLRGAGC. The propeptide occupies 30–366; sequence GHRGPSWSSL…EKTMQKARRR (337 aa). The segment at 39–63 is disordered; it reads LPSAAAGLQGDRDSQQSPGDAAAAL. N-linked (GlcNAc...) asparagine glycans are attached at residues asparagine 114, asparagine 152, and asparagine 277. The tract at residues 268–301 is disordered; that stretch reads GDFEPGAAPNSSADPRVRRAAQVSKPLQDNELPG. 3 disulfides stabilise this stretch: cysteine 374–cysteine 441, cysteine 403–cysteine 473, and cysteine 407–cysteine 475. A glycan (N-linked (GlcNAc...) asparagine) is linked at asparagine 467.

This sequence belongs to the TGF-beta family. Homodimer or heterodimer. Can form a non-covalent complex of the mature region and the pro-region. As to expression, highly expressed in epididymal adipose tissue, brain, bone and aorta and to a lesser extent in liver and spleen. Expressed at higher levels in preadipocytes than in mature adipocytes. Strongly expressed in glial cells of the cerebellum.

The protein localises to the secreted. In terms of biological role, growth factor involved in osteogenesis and adipogenesis. Plays an inhibitory role in the process of osteoblast differentiation via SMAD2/3 pathway. Plays an inhibitory role in the process of adipogenesis. This chain is Growth/differentiation factor 10, found in Mus musculus (Mouse).